Consider the following 229-residue polypeptide: Lipoprotein-releasing system ATP-binding protein LolD (229 aa).

One can recognise an ABC transporter domain in the interval 9 to 229 (LRLEQVARRY…TIREGQIVPA (221 aa)). An ATP-binding site is contributed by 45 to 52 (APSGTGKS).

It belongs to the ABC transporter superfamily. Lipoprotein translocase (TC 3.A.1.125) family. In terms of assembly, the complex is composed of two ATP-binding proteins (LolD) and two transmembrane proteins (LolC and LolE).

Its subcellular location is the cell inner membrane. In terms of biological role, part of the ABC transporter complex LolCDE involved in the translocation of mature outer membrane-directed lipoproteins, from the inner membrane to the periplasmic chaperone, LolA. Responsible for the formation of the LolA-lipoprotein complex in an ATP-dependent manner. This Granulibacter bethesdensis (strain ATCC BAA-1260 / CGDNIH1) protein is Lipoprotein-releasing system ATP-binding protein LolD.